The sequence spans 334 residues: MGKYFYLYENISKVGPYDGPQYYLAPTWAFYLQAAFMGFVFFVGTPLNFVVLLATAKYKKLRVPLNYILVNITFAGFIFVTFSVSQVFLASVRGYYFFGQTLCALEAAVGAVAGLVTSWSLAVLSFERYLVICKPFGAFKFGSNHALAAVIFTWFMGVVRCPPFFGWSRYIPEGLGCSCGPDWYTNCEEFSCASYSKFLLVTCFICPITIIIFSYSQLLGALRAVAAQQAESASTQKAEKEVSRMIIVMVASFVTCYGPYALTAQYYAYSQDENKDYRLVTIPAFFSKSSCVYNPLIYAFMNKQFNGCIMEMVFGKKMEEASEVSSKTEVSTDS.

Topologically, residues 1–29 (MGKYFYLYENISKVGPYDGPQYYLAPTWA) are extracellular. Residue asparagine 10 is glycosylated (N-linked (GlcNAc...) asparagine). Residues 30–54 (FYLQAAFMGFVFFVGTPLNFVVLLA) traverse the membrane as a helical segment. The Cytoplasmic portion of the chain corresponds to 55-66 (TAKYKKLRVPLN). Residues 67 to 88 (YILVNITFAGFIFVTFSVSQVF) traverse the membrane as a helical segment. The Extracellular portion of the chain corresponds to 89–106 (LASVRGYYFFGQTLCALE). A disulfide bridge links cysteine 103 with cysteine 179. Residues 107–126 (AAVGAVAGLVTSWSLAVLSF) traverse the membrane as a helical segment. The Cytoplasmic segment spans residues 127–145 (ERYLVICKPFGAFKFGSNH). A helical transmembrane segment spans residues 146 to 168 (ALAAVIFTWFMGVVRCPPFFGWS). Over 169–194 (RYIPEGLGCSCGPDWYTNCEEFSCAS) the chain is Extracellular. The chain crosses the membrane as a helical span at residues 195–222 (YSKFLLVTCFICPITIIIFSYSQLLGAL). At 223–244 (RAVAAQQAESASTQKAEKEVSR) the chain is on the cytoplasmic side. The chain crosses the membrane as a helical span at residues 245–272 (MIIVMVASFVTCYGPYALTAQYYAYSQD). The Extracellular segment spans residues 273 to 279 (ENKDYRL). Residues 280–301 (VTIPAFFSKSSCVYNPLIYAFM) form a helical membrane-spanning segment. N6-(retinylidene)lysine is present on lysine 288. Residues 302 to 334 (NKQFNGCIMEMVFGKKMEEASEVSSKTEVSTDS) are Cytoplasmic-facing.

It belongs to the G-protein coupled receptor 1 family. Opsin subfamily. In terms of processing, phosphorylated on some or all of the serine and threonine residues present in the C-terminal region. The three color pigments are found in the cone photoreceptor cells.

The protein localises to the membrane. Functionally, visual pigments are the light-absorbing molecules that mediate vision. They consist of an apoprotein, opsin, covalently linked to cis-retinal. This chain is Putative violet-sensitive opsin, found in Oryzias latipes (Japanese rice fish).